Here is a 650-residue protein sequence, read N- to C-terminus: 1-deoxy-D-xylulose-5-phosphate synthase (650 aa).

Positions Met-1–His-13 are enriched in basic and acidic residues. The disordered stretch occupies residues Met-1 to Leu-23. Residues His-92 and Ala-133–Ser-135 each bind thiamine diphosphate. Mg(2+) is bound at residue Asp-164. Thiamine diphosphate contacts are provided by residues Gly-165 to Ala-166, Asn-193, Tyr-302, and Glu-384. Asn-193 is a binding site for Mg(2+).

The protein belongs to the transketolase family. DXPS subfamily. Homodimer. Requires Mg(2+) as cofactor. Thiamine diphosphate serves as cofactor.

It catalyses the reaction D-glyceraldehyde 3-phosphate + pyruvate + H(+) = 1-deoxy-D-xylulose 5-phosphate + CO2. It functions in the pathway metabolic intermediate biosynthesis; 1-deoxy-D-xylulose 5-phosphate biosynthesis; 1-deoxy-D-xylulose 5-phosphate from D-glyceraldehyde 3-phosphate and pyruvate: step 1/1. Its function is as follows. Catalyzes the acyloin condensation reaction between C atoms 2 and 3 of pyruvate and glyceraldehyde 3-phosphate to yield 1-deoxy-D-xylulose-5-phosphate (DXP). The polypeptide is 1-deoxy-D-xylulose-5-phosphate synthase (Chelativorans sp. (strain BNC1)).